We begin with the raw amino-acid sequence, 1054 residues long: Acid trehalase (1054 aa).

The signal sequence occupies residues 1–21; that stretch reads MRFKSVFTLLPLLAQLPSGGA. 5 N-linked (GlcNAc...) asparagine glycosylation sites follow: Asn47, Asn135, Asn176, Asn283, and Asn307. Substrate is bound at residue 448–449; it reads WD. 4 N-linked (GlcNAc...) asparagine glycosylation sites follow: Asn493, Asn513, Asn570, and Asn578. Glu584 serves as the catalytic Proton donor. N-linked (GlcNAc...) asparagine glycosylation is found at Asn618 and Asn644. Residue 650–651 coordinates substrate; it reads KQ. N-linked (GlcNAc...) asparagine glycans are attached at residues Asn665, Asn734, Asn803, Asn826, Asn838, Asn903, Asn937, Asn966, and Asn992.

Belongs to the glycosyl hydrolase 65 family.

It carries out the reaction alpha,alpha-trehalose + H2O = alpha-D-glucose + beta-D-glucose. In Emericella nidulans (strain FGSC A4 / ATCC 38163 / CBS 112.46 / NRRL 194 / M139) (Aspergillus nidulans), this protein is Acid trehalase (treA).